The sequence spans 303 residues: Methionyl-tRNA formyltransferase (303 aa).

108-111 lines the (6S)-5,6,7,8-tetrahydrofolate pocket; the sequence is SDLP.

The protein belongs to the Fmt family.

It catalyses the reaction L-methionyl-tRNA(fMet) + (6R)-10-formyltetrahydrofolate = N-formyl-L-methionyl-tRNA(fMet) + (6S)-5,6,7,8-tetrahydrofolate + H(+). Functionally, attaches a formyl group to the free amino group of methionyl-tRNA(fMet). The formyl group appears to play a dual role in the initiator identity of N-formylmethionyl-tRNA by promoting its recognition by IF2 and preventing the misappropriation of this tRNA by the elongation apparatus. This chain is Methionyl-tRNA formyltransferase, found in Rickettsia peacockii (strain Rustic).